Here is a 456-residue protein sequence, read N- to C-terminus: MAQKPSIPKGTRDFSPEEVAKRNYIFNTIQTEFKGFGFQPIETPSFENSSTLMGKYGDEGDRLIFKILNSGDFLKKADKDALANSDSLKLTSSISEKALRYDLTVPFARYVVQHQNEIEFPFKRYQIQPVWRADRPQKGRFREFFQCDADVVGSNSLWQEVEFVQLYDAVFNKLGLEGVTIKINNRKVLSGFAEVIGEQDKLIDFTVALDKLDKIGEEGVKKEMREKGISEEALNKIQPIFNLNGNFAEKIEGLKTILEGSETGQKGIEELQFIQNAIEEMPLSVAKLDLDVTLARGLNYYTGAIFEVAAPENVKMGSIGGGGRYDDLTGIFGLKDMSGIGISFGLDRIYLVLEELGLFPATVTENTKVLFINFGEKEALYAMKAVKRLREENIIAELYPDSAKMGKQMKYADKRSIPYVVLAGEEEINDKKFTLKHMKSGEQSNLDFNGLSGALK.

This sequence belongs to the class-II aminoacyl-tRNA synthetase family. As to quaternary structure, homodimer.

Its subcellular location is the cytoplasm. The enzyme catalyses tRNA(His) + L-histidine + ATP = L-histidyl-tRNA(His) + AMP + diphosphate + H(+). The sequence is that of Histidine--tRNA ligase from Christiangramia forsetii (strain DSM 17595 / CGMCC 1.15422 / KT0803) (Gramella forsetii).